We begin with the raw amino-acid sequence, 334 residues long: Phosphate acyltransferase (334 aa).

It belongs to the PlsX family. Homodimer. Probably interacts with PlsY.

The protein resides in the cytoplasm. The enzyme catalyses a fatty acyl-[ACP] + phosphate = an acyl phosphate + holo-[ACP]. It participates in lipid metabolism; phospholipid metabolism. In terms of biological role, catalyzes the reversible formation of acyl-phosphate (acyl-PO(4)) from acyl-[acyl-carrier-protein] (acyl-ACP). This enzyme utilizes acyl-ACP as fatty acyl donor, but not acyl-CoA. This is Phosphate acyltransferase from Fervidobacterium nodosum (strain ATCC 35602 / DSM 5306 / Rt17-B1).